The chain runs to 112 residues: uncharacterized protein (112 aa).

A helical transmembrane segment spans residues 85–105 (IVQLIILFAIIITNPNAIELI).

Belongs to the M.jannaschii MJ0023/MJ0349/MJ1072/MJ1074/MJ1107/MJECL16 family.

The protein localises to the membrane. This is an uncharacterized protein from Methanocaldococcus jannaschii (strain ATCC 43067 / DSM 2661 / JAL-1 / JCM 10045 / NBRC 100440) (Methanococcus jannaschii).